The chain runs to 229 residues: MIDHTHLRLFQFCDSQFPTGAFSHSFGLETYIQRNIIHDDHTFIAWLKMFLQEQLTYSDGLAMRLVYDALENDDTQKVLHIDKLMFVQNLPKETRVGAKQMGTRMVKLALELYNSPWIAWYHQQMQDKKAKLNPAICFTMLGHHLGVDIETIIDYYLYQNVSSLTQNAVRAIPLGQTAGQKIVTHMIPYIEETRKQIFELKEADFGMTAPGLELNQMAHENVNVRIFIS.

This sequence belongs to the UreF family. As to quaternary structure, ureD, UreF and UreG form a complex that acts as a GTP-hydrolysis-dependent molecular chaperone, activating the urease apoprotein by helping to assemble the nickel containing metallocenter of UreC. The UreE protein probably delivers the nickel.

The protein localises to the cytoplasm. Required for maturation of urease via the functional incorporation of the urease nickel metallocenter. The polypeptide is Urease accessory protein UreF (Staphylococcus aureus (strain JH1)).